We begin with the raw amino-acid sequence, 429 residues long: Enolase (429 aa).

Residue Gln163 coordinates (2R)-2-phosphoglycerate. The Proton donor role is filled by Glu205. Residues Asp242, Glu287, and Asp314 each contribute to the Mg(2+) site. (2R)-2-phosphoglycerate-binding residues include Lys339, Arg368, Ser369, and Lys390. Lys339 acts as the Proton acceptor in catalysis.

It belongs to the enolase family. As to quaternary structure, homooctamer. Requires Mg(2+) as cofactor.

The protein resides in the cytoplasm. The protein localises to the secreted. It is found in the cell surface. The catalysed reaction is (2R)-2-phosphoglycerate = phosphoenolpyruvate + H2O. It functions in the pathway carbohydrate degradation; glycolysis; pyruvate from D-glyceraldehyde 3-phosphate: step 4/5. Functionally, catalyzes the reversible conversion of 2-phosphoglycerate (2-PG) into phosphoenolpyruvate (PEP). It is essential for the degradation of carbohydrates via glycolysis. The chain is Enolase from Zymomonas mobilis subsp. mobilis (strain ATCC 31821 / ZM4 / CP4).